Reading from the N-terminus, the 269-residue chain is 3-methyl-2-oxobutanoate hydroxymethyltransferase (269 aa).

D51 and D90 together coordinate Mg(2+). 3-methyl-2-oxobutanoate contacts are provided by residues 51–52 (DS), D90, and K120. E122 lines the Mg(2+) pocket. The Proton acceptor role is filled by E187.

It belongs to the PanB family. In terms of assembly, homodecamer; pentamer of dimers. Mg(2+) is required as a cofactor.

The protein localises to the cytoplasm. The enzyme catalyses 3-methyl-2-oxobutanoate + (6R)-5,10-methylene-5,6,7,8-tetrahydrofolate + H2O = 2-dehydropantoate + (6S)-5,6,7,8-tetrahydrofolate. The protein operates within cofactor biosynthesis; (R)-pantothenate biosynthesis; (R)-pantoate from 3-methyl-2-oxobutanoate: step 1/2. Functionally, catalyzes the reversible reaction in which hydroxymethyl group from 5,10-methylenetetrahydrofolate is transferred onto alpha-ketoisovalerate to form ketopantoate. In Tropheryma whipplei (strain TW08/27) (Whipple's bacillus), this protein is 3-methyl-2-oxobutanoate hydroxymethyltransferase.